The following is a 365-amino-acid chain: Tetraacyldisaccharide 4'-kinase (365 aa).

68–75 lines the ATP pocket; that stretch reads VVGGAGKT.

The protein belongs to the LpxK family.

It carries out the reaction a lipid A disaccharide + ATP = a lipid IVA + ADP + H(+). The protein operates within glycolipid biosynthesis; lipid IV(A) biosynthesis; lipid IV(A) from (3R)-3-hydroxytetradecanoyl-[acyl-carrier-protein] and UDP-N-acetyl-alpha-D-glucosamine: step 6/6. Transfers the gamma-phosphate of ATP to the 4'-position of a tetraacyldisaccharide 1-phosphate intermediate (termed DS-1-P) to form tetraacyldisaccharide 1,4'-bis-phosphate (lipid IVA). The polypeptide is Tetraacyldisaccharide 4'-kinase (Chlamydia pneumoniae (Chlamydophila pneumoniae)).